The chain runs to 237 residues: Ribonuclease PH (237 aa).

Phosphate contacts are provided by residues arginine 86 and 124 to 126 (GTR).

The protein belongs to the RNase PH family. As to quaternary structure, homohexameric ring arranged as a trimer of dimers.

The enzyme catalyses tRNA(n+1) + phosphate = tRNA(n) + a ribonucleoside 5'-diphosphate. In terms of biological role, phosphorolytic 3'-5' exoribonuclease that plays an important role in tRNA 3'-end maturation. Removes nucleotide residues following the 3'-CCA terminus of tRNAs; can also add nucleotides to the ends of RNA molecules by using nucleoside diphosphates as substrates, but this may not be physiologically important. Probably plays a role in initiation of 16S rRNA degradation (leading to ribosome degradation) during starvation. This Nitrobacter hamburgensis (strain DSM 10229 / NCIMB 13809 / X14) protein is Ribonuclease PH.